Consider the following 329-residue polypeptide: Ribonucleoside-diphosphate reductase small chain (329 aa).

Fe cation-binding residues include D75, E106, and H109. Residue Y113 is part of the active site. Residues E168, E202, and H205 each coordinate Fe cation.

Belongs to the ribonucleoside diphosphate reductase small chain family. Heterodimer of a large and a small chain. It depends on Fe cation as a cofactor.

The protein localises to the cytoplasm. The catalysed reaction is a 2'-deoxyribonucleoside 5'-diphosphate + [thioredoxin]-disulfide + H2O = a ribonucleoside 5'-diphosphate + [thioredoxin]-dithiol. Its function is as follows. Provides the precursors necessary for DNA synthesis. Catalyzes the biosynthesis of deoxyribonucleotides from the corresponding ribonucleotides. The chain is Ribonucleoside-diphosphate reductase small chain from Nicotiana tabacum (Common tobacco).